A 941-amino-acid chain; its full sequence is Gamma-aminobutyric acid type B receptor subunit 2 (941 aa).

Positions 1–41 are cleaved as a signal peptide; that stretch reads MASPRSSGQPGPPPPPPPPPARLLLLLLLPLLLPLAPGAWG. The Extracellular portion of the chain corresponds to 42 to 483; it reads WARGAPRPPP…LRKISLPLYS (442 aa). Asparagine 90 is a glycosylation site (N-linked (GlcNAc...) asparagine). Intrachain disulfides connect cysteine 108–cysteine 135, cysteine 237–cysteine 266, and cysteine 265–cysteine 302. Asparagine 298, asparagine 389, asparagine 404, and asparagine 453 each carry an N-linked (GlcNAc...) asparagine glycan. The helical transmembrane segment at 484–504 threads the bilayer; it reads ILSALTILGMIMASAFLFFNI. Residues 505–522 lie on the Cytoplasmic side of the membrane; that stretch reads KNRNQKLIKMSSPYMNNL. A helical transmembrane segment spans residues 523-543; it reads IILGGMLSYASIFLFGLDGSF. Topologically, residues 544 to 551 are extracellular; the sequence is VSEKTFET. A helical membrane pass occupies residues 552–572; the sequence is LCTVRTWILTVGYTTAFGAMF. Over 573-597 the chain is Cytoplasmic; sequence AKTWRVHAIFKNVKMKKKIIKDQKL. A helical membrane pass occupies residues 598–618; that stretch reads LVIVGGMLLIDLCILICWQAV. Topologically, residues 619–654 are extracellular; that stretch reads DPLRRTVEKYSMEPDPAGRDISIRPLLEHCENTHMT. Residues 655–675 traverse the membrane as a helical segment; it reads IWLGIVYAYKGLLMLFGCFLA. Residues 676-691 lie on the Cytoplasmic side of the membrane; the sequence is WETRNVSIPALNDSKY. Residues 692–712 form a helical membrane-spanning segment; it reads IGMSVYNVGIMCIIGAAVSFL. The Extracellular segment spans residues 713–720; that stretch reads TRDQPNVQ. Residues 721-741 form a helical membrane-spanning segment; it reads FCIVALVIIFCSTITLCLVFV. Residues 742–941 lie on the Cytoplasmic side of the membrane; sequence PKLITLRTNP…PSFRVMVSGL (200 aa). Residues 763-790 are disordered; it reads TQNQKKEDSKTSTSVTSVNQASTSRLEG. Over residues 773–787 the composition is skewed to polar residues; sequence TSTSVTSVNQASTSR. 2 positions are modified to phosphoserine: serine 776 and serine 779. Residues 781 to 819 adopt a coiled-coil conformation; sequence NQASTSRLEGLQSENHRLRMKITELDKDLEEVTMQLQDT. At threonine 819 the chain carries Phosphothreonine. 6 positions are modified to phosphoserine: serine 884, serine 893, serine 913, serine 916, serine 920, and serine 924.

Belongs to the G-protein coupled receptor 3 family. GABA-B receptor subfamily. Heterodimer of GABBR1 and GABBR2. Homodimers may form, but are inactive. Interacts (via C-terminus) with ATF4 (via leucine zipper domain). Highly expressed in brain, especially in cerebral cortex, thalamus, hippocampus, frontal, occipital and temporal lobe, occipital pole and cerebellum, followed by corpus callosum, caudate nucleus, spinal cord, amygdala and medulla. Weakly expressed in heart, testis and skeletal muscle.

The protein localises to the cell membrane. It is found in the postsynaptic cell membrane. Component of a heterodimeric G-protein coupled receptor for GABA, formed by GABBR1 and GABBR2. Within the heterodimeric GABA receptor, only GABBR1 seems to bind agonists, while GABBR2 mediates coupling to G proteins. Ligand binding causes a conformation change that triggers signaling via guanine nucleotide-binding proteins (G proteins) and modulates the activity of down-stream effectors, such as adenylate cyclase. Signaling inhibits adenylate cyclase, stimulates phospholipase A2, activates potassium channels, inactivates voltage-dependent calcium-channels and modulates inositol phospholipid hydrolysis. Plays a critical role in the fine-tuning of inhibitory synaptic transmission. Pre-synaptic GABA receptor inhibits neurotransmitter release by down-regulating high-voltage activated calcium channels, whereas postsynaptic GABA receptor decreases neuronal excitability by activating a prominent inwardly rectifying potassium (Kir) conductance that underlies the late inhibitory postsynaptic potentials. Not only implicated in synaptic inhibition but also in hippocampal long-term potentiation, slow wave sleep, muscle relaxation and antinociception. This chain is Gamma-aminobutyric acid type B receptor subunit 2 (GABBR2), found in Homo sapiens (Human).